Consider the following 136-residue polypeptide: Large ribosomal subunit protein uL16 (136 aa).

The protein belongs to the universal ribosomal protein uL16 family. As to quaternary structure, part of the 50S ribosomal subunit.

Its function is as follows. Binds 23S rRNA and is also seen to make contacts with the A and possibly P site tRNAs. The protein is Large ribosomal subunit protein uL16 of Rickettsia akari (strain Hartford).